We begin with the raw amino-acid sequence, 289 residues long: Acetyl-coenzyme A carboxylase carboxyl transferase subunit beta (289 aa).

In terms of domain architecture, CoA carboxyltransferase N-terminal spans 28–289; the sequence is VMTKCPKCKK…QGGEMAVWQS (262 aa). 4 residues coordinate Zn(2+): Cys-32, Cys-35, Cys-51, and Cys-54. A C4-type zinc finger spans residues 32 to 54; that stretch reads CPKCKKIMYTKEVLKNLKVCVNC.

The protein belongs to the AccD/PCCB family. As to quaternary structure, acetyl-CoA carboxylase is a heterohexamer composed of biotin carboxyl carrier protein (AccB), biotin carboxylase (AccC) and two subunits each of ACCase subunit alpha (AccA) and ACCase subunit beta (AccD). The cofactor is Zn(2+).

The protein resides in the cytoplasm. It catalyses the reaction N(6)-carboxybiotinyl-L-lysyl-[protein] + acetyl-CoA = N(6)-biotinyl-L-lysyl-[protein] + malonyl-CoA. The protein operates within lipid metabolism; malonyl-CoA biosynthesis; malonyl-CoA from acetyl-CoA: step 1/1. Functionally, component of the acetyl coenzyme A carboxylase (ACC) complex. Biotin carboxylase (BC) catalyzes the carboxylation of biotin on its carrier protein (BCCP) and then the CO(2) group is transferred by the transcarboxylase to acetyl-CoA to form malonyl-CoA. The sequence is that of Acetyl-coenzyme A carboxylase carboxyl transferase subunit beta from Bacillus anthracis (strain A0248).